The chain runs to 518 residues: 2-isopropylmalate synthase (518 aa).

Residues 5-267 form the Pyruvate carboxyltransferase domain; it reads VIIFDTTLRD…STNIKHKEIY (263 aa). The Mn(2+) site is built by Asp-14, His-202, His-204, and Asn-238. The tract at residues 392-518 is regulatory domain; the sequence is SLSFFSVQSI…KLKTLKKVNN (127 aa).

It belongs to the alpha-IPM synthase/homocitrate synthase family. LeuA type 1 subfamily. Homodimer. Mn(2+) is required as a cofactor.

It localises to the cytoplasm. The catalysed reaction is 3-methyl-2-oxobutanoate + acetyl-CoA + H2O = (2S)-2-isopropylmalate + CoA + H(+). It functions in the pathway amino-acid biosynthesis; L-leucine biosynthesis; L-leucine from 3-methyl-2-oxobutanoate: step 1/4. Catalyzes the condensation of the acetyl group of acetyl-CoA with 3-methyl-2-oxobutanoate (2-ketoisovalerate) to form 3-carboxy-3-hydroxy-4-methylpentanoate (2-isopropylmalate). This is 2-isopropylmalate synthase from Buchnera aphidicola subsp. Schizaphis graminum (strain Sg).